The sequence spans 516 residues: Immunoglobulin G-binding protein A (516 aa).

The signal sequence occupies residues 1–36 (MKKKNIYSIRKLGVGIASVTLGTLLISGGVTPAANA). The short motif at 7 to 18 (YSIRKLGVGIAS) is the YSIRK-G/S signaling motif element. One copy of the Immunoglobulin-binding region E repeat lies at 37-92 (AQHDEAQQNAFYQVLNMPNLNADQRNGFIQSLKDDPSQSANVLGEAQKLNDSQAPK). The Immunoglobulin-binding region D repeat unit spans residues 93-153 (ADAQQNNFNK…KKLNESQAPK (61 aa)). One copy of the Immunoglobulin-binding region A repeat lies at 154-211 (ADNNFNKEQQNAFYEILNMPNLNEEQRNGFIQSLKDDPSQSANLLSEAKKLNESQAPK). The stretch at 212–269 (ADNKFNKEQQNAFYEILHLPNLNEEQRNGFIQSLKDDPSQSANLLAEAKKLNDAQAPK) is one Immunoglobulin-binding region B repeat. One copy of the Immunoglobulin-binding region C repeat lies at 270 to 327 (ADNKFNKEQQNAFYEILHLPNLTEEQRNGFIQSLKDDPSVSKEILAEAKKLNDAQAPK). Residues 318-420 (KKLNDAQAPK…GNKPGKEDGN (103 aa)) are compositionally biased toward basic and acidic residues. Disordered stretches follow at residues 318 to 440 (KKLN…ANGT) and 467 to 487 (KKQP…ETGE). A run of 11 repeats spans residues 333-340 (KPGKEDNN), 341-348 (KPGKEDNN), 349-356 (KPGKEDNN), 357-364 (KPGKEDNN), 365-372 (KPGKEDGN), 373-380 (KPGKEDNK), 381-388 (KPGKEDGN), 389-396 (KPGKEDNK), 397-404 (KPGKEDGN), 405-412 (KPGKEDGN), and 413-420 (KPGKEDGN). Residues 333 to 420 (KPGKEDNNKP…GNKPGKEDGN (88 aa)) form an 11 X 8 AA approximate tandem repeats region. In terms of domain architecture, LysM spans 421–465 (GVHVVKPGDTVNDIAKANGTTADKIAADNKLADKNMIKPGQELVV). The LPXTG sorting signal motif lies at 482–486 (LPETG). Thr-485 carries the pentaglycyl murein peptidoglycan amidated threonine modification. Positions 486–516 (GEENPFIGTTVFGGLSLALGAALLAGRRREL) are cleaved as a propeptide — removed by sortase A.

The protein belongs to the immunoglobulin-binding protein SpA family. As to quaternary structure, interacts with host TNFRSF1A; this interaction leads to the stimulation of both surface expression and shedding of TNFRSF1A.

Its subcellular location is the secreted. It is found in the cell wall. Plays a role in the inhibition of the host innate and adaptive immune responses. Possesses five immunoglobulin-binding domains that capture both the fragment crystallizable region (Fc region) and the Fab region (part of Ig that identifies antigen) of immunoglobulins. In turn, Staphylococcus aureus is protected from phagocytic killing via inhibition of Ig Fc region. In addition, the host elicited B-cell response is prevented due to a decrease of antibody-secreting cell proliferation that enter the bone marrow, thereby decreasing long-term antibody production. Inhibits osteogenesis by preventing osteoblast proliferation and expression of alkaline phosphatase, type I collagen, osteopontin and osteocalcin. Acts directly as a pro-inflammatory factor in the lung through its ability to bind and activate tumor necrosis factor alpha receptor 1/TNFRSF1A. The chain is Immunoglobulin G-binding protein A (spa) from Staphylococcus aureus (strain NCTC 8325 / PS 47).